The chain runs to 137 residues: Large ribosomal subunit protein uL16 (137 aa).

It belongs to the universal ribosomal protein uL16 family. As to quaternary structure, part of the 50S ribosomal subunit.

Binds 23S rRNA and is also seen to make contacts with the A and possibly P site tRNAs. This Streptococcus agalactiae serotype Ia (strain ATCC 27591 / A909 / CDC SS700) protein is Large ribosomal subunit protein uL16.